The chain runs to 534 residues: C-22 sterol desaturase ERG5B (534 aa).

Residues 43–61 traverse the membrane as a helical segment; the sequence is IAVTIFAVLIAYDQFMYIW. Heme is bound at residue Cys-480.

The protein belongs to the cytochrome P450 family. Heme serves as cofactor.

The protein localises to the endoplasmic reticulum membrane. It carries out the reaction 5-dehydroepisterol + NADPH + O2 + H(+) = ergosta-5,7,22,24(28)-tetraen-3beta-ol + NADP(+) + 2 H2O. It participates in steroid metabolism; ergosterol biosynthesis. Its function is as follows. C-22 sterol desaturase; part of the third module of ergosterol biosynthesis pathway that includes the late steps of the pathway. ERG5A and ERG5B convert 5-dehydroepisterol into ergosta-5,7,22,24(28)-tetraen-3beta-ol by forming the C-22(23) double bond in the sterol side chain. The third module or late pathway involves the ergosterol synthesis itself through consecutive reactions that mainly occur in the endoplasmic reticulum (ER) membrane. Firstly, the squalene synthase ERG9 catalyzes the condensation of 2 farnesyl pyrophosphate moieties to form squalene, which is the precursor of all steroids. Squalene synthase is crucial for balancing the incorporation of farnesyl diphosphate (FPP) into sterol and nonsterol isoprene synthesis. Secondly, squalene is converted into lanosterol by the consecutive action of the squalene epoxidase ERG1 and the lanosterol synthase ERG7. Then, the delta(24)-sterol C-methyltransferase ERG6 methylates lanosterol at C-24 to produce eburicol. Eburicol is the substrate of the sterol 14-alpha demethylase encoded by CYP51A, CYP51B and CYP51C, to yield 4,4,24-trimethyl ergosta-8,14,24(28)-trienol. CYP51B encodes the enzyme primarily responsible for sterol 14-alpha-demethylation, and plays an essential role in ascospore formation. CYP51A encodes an additional sterol 14-alpha-demethylase, induced on ergosterol depletion and responsible for the intrinsic variation in azole sensitivity. The third CYP51 isoform, CYP51C, does not encode a sterol 14-alpha-demethylase, but is required for full virulence on host wheat ears. The C-14 reductase ERG24 then reduces the C14=C15 double bond which leads to 4,4-dimethylfecosterol. A sequence of further demethylations at C-4, involving the C-4 demethylation complex containing the C-4 methylsterol oxidases ERG25, the sterol-4-alpha-carboxylate 3-dehydrogenase ERG26 and the 3-keto-steroid reductase ERG27, leads to the production of fecosterol via 4-methylfecosterol. ERG28 has a role as a scaffold to help anchor ERG25, ERG26 and ERG27 to the endoplasmic reticulum. The C-8 sterol isomerase ERG2 then catalyzes the reaction which results in unsaturation at C-7 in the B ring of sterols and thus converts fecosterol to episterol. The sterol-C5-desaturases ERG3A and ERG3BB then catalyze the introduction of a C-5 double bond in the B ring to produce 5-dehydroepisterol. The C-22 sterol desaturases ERG5A and ERG5B further convert 5-dehydroepisterol into ergosta-5,7,22,24(28)-tetraen-3beta-ol by forming the C-22(23) double bond in the sterol side chain. Finally, ergosta-5,7,22,24(28)-tetraen-3beta-ol is substrate of the C-24(28) sterol reductase ERG4 to produce ergosterol. This Gibberella zeae (strain ATCC MYA-4620 / CBS 123657 / FGSC 9075 / NRRL 31084 / PH-1) (Wheat head blight fungus) protein is C-22 sterol desaturase ERG5B.